The following is a 215-amino-acid chain: ATP-dependent Clp protease proteolytic subunit (215 aa).

The Nucleophile role is filled by serine 116. Histidine 141 is an active-site residue.

Belongs to the peptidase S14 family. Fourteen ClpP subunits assemble into 2 heptameric rings which stack back to back to give a disk-like structure with a central cavity, resembling the structure of eukaryotic proteasomes.

The protein localises to the cytoplasm. It carries out the reaction Hydrolysis of proteins to small peptides in the presence of ATP and magnesium. alpha-casein is the usual test substrate. In the absence of ATP, only oligopeptides shorter than five residues are hydrolyzed (such as succinyl-Leu-Tyr-|-NHMec, and Leu-Tyr-Leu-|-Tyr-Trp, in which cleavage of the -Tyr-|-Leu- and -Tyr-|-Trp bonds also occurs).. In terms of biological role, cleaves peptides in various proteins in a process that requires ATP hydrolysis. Has a chymotrypsin-like activity. Plays a major role in the degradation of misfolded proteins. This is ATP-dependent Clp protease proteolytic subunit from Psychrobacter cryohalolentis (strain ATCC BAA-1226 / DSM 17306 / VKM B-2378 / K5).